Reading from the N-terminus, the 188-residue chain is Dual specificity protein phosphatase 18 (188 aa).

In terms of domain architecture, Tyrosine-protein phosphatase spans 19–160; the sequence is GLSQITKSLY…LIHYEFQLFG (142 aa). Cys-104 functions as the Phosphocysteine intermediate in the catalytic mechanism.

It belongs to the protein-tyrosine phosphatase family. Non-receptor class dual specificity subfamily. Widely expressed with highest levels in liver, brain, ovary and testis.

Its subcellular location is the cytoplasm. The protein resides in the nucleus. It localises to the mitochondrion inner membrane. The enzyme catalyses O-phospho-L-tyrosyl-[protein] + H2O = L-tyrosyl-[protein] + phosphate. The catalysed reaction is O-phospho-L-seryl-[protein] + H2O = L-seryl-[protein] + phosphate. It catalyses the reaction O-phospho-L-threonyl-[protein] + H2O = L-threonyl-[protein] + phosphate. With respect to regulation, activated by manganese ions, inhibited by iodoacetic acid. In terms of biological role, can dephosphorylate single and diphosphorylated synthetic MAPK peptides, with preference for the phosphotyrosine and diphosphorylated forms over phosphothreonine. In vitro, dephosphorylates p-nitrophenyl phosphate (pNPP). This is Dual specificity protein phosphatase 18 (DUSP18) from Homo sapiens (Human).